The primary structure comprises 472 residues: Aspartyl/glutamyl-tRNA(Asn/Gln) amidotransferase subunit B (472 aa).

The protein belongs to the GatB/GatE family. GatB subfamily. In terms of assembly, heterotrimer of A, B and C subunits.

The enzyme catalyses L-glutamyl-tRNA(Gln) + L-glutamine + ATP + H2O = L-glutaminyl-tRNA(Gln) + L-glutamate + ADP + phosphate + H(+). The catalysed reaction is L-aspartyl-tRNA(Asn) + L-glutamine + ATP + H2O = L-asparaginyl-tRNA(Asn) + L-glutamate + ADP + phosphate + 2 H(+). Its function is as follows. Allows the formation of correctly charged Asn-tRNA(Asn) or Gln-tRNA(Gln) through the transamidation of misacylated Asp-tRNA(Asn) or Glu-tRNA(Gln) in organisms which lack either or both of asparaginyl-tRNA or glutaminyl-tRNA synthetases. The reaction takes place in the presence of glutamine and ATP through an activated phospho-Asp-tRNA(Asn) or phospho-Glu-tRNA(Gln). This is Aspartyl/glutamyl-tRNA(Asn/Gln) amidotransferase subunit B from Campylobacter jejuni subsp. jejuni serotype O:6 (strain 81116 / NCTC 11828).